Reading from the N-terminus, the 145-residue chain is Bacilliredoxin SAR1592 (145 aa).

Belongs to the bacilliredoxin family.

In Staphylococcus aureus (strain MRSA252), this protein is Bacilliredoxin SAR1592.